The following is a 769-amino-acid chain: Non-secreted LysM effector LysM17 (769 aa).

Residues 173-193 (LPPLATAIPLAVVWASLASVI) form a helical membrane-spanning segment. N-linked (GlcNAc...) asparagine glycosylation is found at Asn-305, Asn-368, Asn-423, and Asn-452. LysM domains lie at 498–543 (RTIQ…HVCC) and 562–610 (YSNL…KICL). N-linked (GlcNAc...) asparagine glycosylation is found at Asn-631, Asn-671, Asn-706, and Asn-734.

The protein belongs to the secreted LysM effector family.

It is found in the membrane. Functionally, non-secreted LysM effector that might be involved in manipulation of host defenses for successful infection. The protein is Non-secreted LysM effector LysM17 of Penicillium expansum (Blue mold rot fungus).